We begin with the raw amino-acid sequence, 154 residues long: Ribosome maturation factor RimP (154 aa).

It belongs to the RimP family.

It localises to the cytoplasm. Functionally, required for maturation of 30S ribosomal subunits. This chain is Ribosome maturation factor RimP, found in Desulforudis audaxviator (strain MP104C).